Consider the following 191-residue polypeptide: Photosystem I assembly protein Ycf4 (191 aa).

The next 2 helical transmembrane spans lie at 34-54 (VASMLSIGGVGFLLASFSSYF) and 68-88 (IFVPQGLVMGLYGVAAFLLAI).

Belongs to the Ycf4 family.

Its subcellular location is the cellular thylakoid membrane. Seems to be required for the assembly of the photosystem I complex. This Prochlorococcus marinus (strain NATL2A) protein is Photosystem I assembly protein Ycf4.